We begin with the raw amino-acid sequence, 309 residues long: Homoserine O-acetyltransferase (309 aa).

Cys142 serves as the catalytic Acyl-thioester intermediate. Residues Lys163 and Ser192 each coordinate substrate. Residue His235 is the Proton acceptor of the active site. The active site involves Glu237. Residue Arg249 participates in substrate binding.

Belongs to the MetA family.

Its subcellular location is the cytoplasm. The catalysed reaction is L-homoserine + acetyl-CoA = O-acetyl-L-homoserine + CoA. Its pathway is amino-acid biosynthesis; L-methionine biosynthesis via de novo pathway; O-acetyl-L-homoserine from L-homoserine: step 1/1. In terms of biological role, transfers an acetyl group from acetyl-CoA to L-homoserine, forming acetyl-L-homoserine. The protein is Homoserine O-acetyltransferase of Allorhizobium ampelinum (strain ATCC BAA-846 / DSM 112012 / S4) (Agrobacterium vitis (strain S4)).